The chain runs to 142 residues: Large ribosomal subunit protein uL11 (142 aa).

This sequence belongs to the universal ribosomal protein uL11 family. In terms of assembly, part of the ribosomal stalk of the 50S ribosomal subunit. Interacts with L10 and the large rRNA to form the base of the stalk. L10 forms an elongated spine to which L12 dimers bind in a sequential fashion forming a multimeric L10(L12)X complex. In terms of processing, one or more lysine residues are methylated.

Functionally, forms part of the ribosomal stalk which helps the ribosome interact with GTP-bound translation factors. The sequence is that of Large ribosomal subunit protein uL11 from Lachnoclostridium phytofermentans (strain ATCC 700394 / DSM 18823 / ISDg) (Clostridium phytofermentans).